The chain runs to 472 residues: Meiotic spindle formation protein mei-1 (472 aa).

The interval 83–161 (HEAMTRQSGS…TQGILPQNSA (79 aa)) is disordered. Ser-92 bears the Phosphoserine; by mbk-2 mark. Composition is skewed to polar residues over residues 134 to 143 (KSTSSMSTNP) and 150 to 161 (NPTQGILPQNSA). Residues 233–240 (GPPGTGKT) and 351–352 (RR) each bind ATP.

Belongs to the AAA ATPase family. Katanin p60 subunit A1 subfamily. As to quaternary structure, homohexamer; ATP hydrolysis initiates a cycle between an open spiral and a closed ring conformation which is probably involved in pulling tubulin dimers out from microtubules. Interacts with mei-2, which may serve as a targeting subunit. Interacts with mel-26, which targets mei-1 for ubiquitin mediated proteolysis. Interacts with phosphatase pph-4.1. Post-translationally, phosphorylated. Phosphorylation by mbk-2 is required for its rapid degradation following meiosis II. Likely dephosphorylated by the PP4 complex composed of catalytic subunit pph-4.1 and regulatory subunit ppfr-1. In terms of processing, polyubiquitination targets the protein for rapid degradation via the ubiquitin system at the end of meiosis. The BTB domain protein mel-26 may serve to specifically target mei-1 for ubiquitination by cul-3 containing complexes. The cul-3 protein is in turn regulated by neddylation by ned-8.

It localises to the cytoplasm. The protein resides in the cytoskeleton. It is found in the spindle pole. The protein localises to the chromosome. The catalysed reaction is n ATP + n H2O + a microtubule = n ADP + n phosphate + (n+1) alpha/beta tubulin heterodimers.. With respect to regulation, ATPase activity is stimulated by microtubules, which promote homooligomerization. ATP-dependent microtubule severing is stimulated by interaction with mei-2. Functionally, catalytic subunit of a complex which severs microtubules in an ATP-dependent manner. Microtubule severing may promote rapid reorganization of cellular microtubule arrays. Required specifically for meiotic spindle formation in the female germline; the presence of this protein is inimical to the formation of mitotic spindles. In body wall muscles, regulates organization of myosin thick filaments. The polypeptide is Meiotic spindle formation protein mei-1 (Caenorhabditis elegans).